The chain runs to 390 residues: Zinc finger CCCH domain-containing protein 46 (390 aa).

The C3H1-type zinc finger occupies 2-29; that stretch reads SRRQEICRNFQRGSCKYGAQCRYLHASP. Residues 27–129 are disordered; the sequence is ASPHQQQQQQ…AAHTSCEDPQ (103 aa). Residues 48–76 are compositionally biased toward low complexity; sequence GSRQQQQPSFGSQFQQQQQQQQKPNPFGF. Over residues 106-129 the composition is skewed to polar residues; that stretch reads PTKQTEAVQPPQAQAAHTSCEDPQ. A required for transcriptional activation activity region spans residues 146 to 211; the sequence is WKLTCYAHLR…FTNLLNSARP (66 aa). Over residues 230-248 the composition is skewed to polar residues; it reads SSFGASQTNGPPVFSSFSQ. Residues 230-284 form a disordered region; the sequence is SSFGASQTNGPPVFSSFSQIGAATNIGPGPGTTAPGMPASSPFGHPSSAPLAAPT. Positions 250–268 are enriched in low complexity; it reads GAATNIGPGPGTTAPGMPA.

As to quaternary structure, interacts with GSK1 and GSK4. Post-translationally, phosphorylated on serine and threonine residues by GSK1. Phosphorylation represses nuclear localization. As to expression, expressed in the adaxial face of the collar, nodes and the basal region of elongating internodes.

Its subcellular location is the nucleus. The protein resides in the cytoplasm. Transcriptional activator that binds double-stranded DNA and the single-stranded RNA polymers poly(rA), poly(rU) and poly(rG), but not poly(rC). Mediates optimal plant architecture through brassinosteroid (BR) signaling. May act as a negative regulator in sterol homeostasis. Acts as a negative regulator of BR signaling. Binds to the specific DNA sequence 5'-CTCGC-3' of BZR1 promoter and negatively regulates BZR1. Acts as an antagonistic transcription factor of BZR1 to attenuate the BR signaling pathway and regulate leaf bending. Represses the expression of ILI1, and activates that of IBH1 to balance the regulation activity of BZR1. The polypeptide is Zinc finger CCCH domain-containing protein 46 (Oryza sativa subsp. japonica (Rice)).